A 479-amino-acid chain; its full sequence is Probable acyl-CoA desaturase (479 aa).

The span at 1-18 (MTAPSATAFSSATTQPTT) shows a compositional bias: low complexity. The segment at 1–28 (MTAPSATAFSSATTQPTTEGNASMRKRT) is disordered. At 1 to 61 (MTAPSATAFS…PWTMQNWWRH (61 aa)) the chain is on the cytoplasmic side. A helical transmembrane segment spans residues 62-82 (LNWLHCMLIFGLPMIAIYGVF). Topologically, residues 83 to 89 (TTPLQTK) are lumenal. A helical transmembrane segment spans residues 90–110 (TLIFAIIYYAYSGLGITAGYH). Fe cation is bound by residues histidine 110, histidine 115, histidine 147, histidine 150, and histidine 151. A Histidine box-1 motif is present at residues 110-115 (HRLWSH). The Cytoplasmic portion of the chain corresponds to 111–204 (RLWSHRAYKA…DPFVMFNHRH (94 aa)). Residues 147 to 151 (HRAHH) carry the Histidine box-2 motif. Residues 205–225 (FLPIASFMAFIFPSLFCGLLW) form a helical membrane-spanning segment. Residues 226-229 (GDYR) lie on the Lumenal side of the membrane. The chain crosses the membrane as a helical span at residues 230-250 (GGYFYAGVCRLVFVHHATFCV). Over 251-479 (NSLAHLIGSQ…QPPIEAAAAN (229 aa)) the chain is Cytoplasmic. Fe cation is bound by residues histidine 255, histidine 284, histidine 287, and histidine 288. The Histidine box-3 motif lies at 284 to 288 (HNYHH). One can recognise a Cytochrome b5 heme-binding domain in the interval 357–433 (QLPVMEFEDF…LSTYRVAVVR (77 aa)). Heme-binding residues include histidine 390 and histidine 416.

The protein belongs to the fatty acid desaturase type 1 family. Fe(2+) serves as cofactor.

The protein resides in the membrane. The enzyme catalyses octadecanoyl-CoA + 2 Fe(II)-[cytochrome b5] + O2 + 2 H(+) = (9Z)-octadecenoyl-CoA + 2 Fe(III)-[cytochrome b5] + 2 H2O. Functionally, stearoyl-CoA desaturase that utilizes O(2) and electrons from reduced cytochrome b5 to introduce the first double bond into saturated fatty acyl-CoA substrates. Catalyzes the insertion of a cis double bond at the delta-9 position into fatty acyl-CoA substrates including palmitoyl-CoA and stearoyl-CoA. Contributes to the biosynthesis of membrane phospholipids, cholesterol esters and triglycerides. The chain is Probable acyl-CoA desaturase from Schizosaccharomyces pombe (strain 972 / ATCC 24843) (Fission yeast).